Here is a 306-residue protein sequence, read N- to C-terminus: Acetylglutamate kinase (306 aa).

Substrate contacts are provided by residues 68–69 (GG), Arg90, and Asn195.

Belongs to the acetylglutamate kinase family. ArgB subfamily.

The protein resides in the cytoplasm. It catalyses the reaction N-acetyl-L-glutamate + ATP = N-acetyl-L-glutamyl 5-phosphate + ADP. It participates in amino-acid biosynthesis; L-arginine biosynthesis; N(2)-acetyl-L-ornithine from L-glutamate: step 2/4. Catalyzes the ATP-dependent phosphorylation of N-acetyl-L-glutamate. This Chromohalobacter salexigens (strain ATCC BAA-138 / DSM 3043 / CIP 106854 / NCIMB 13768 / 1H11) protein is Acetylglutamate kinase.